Here is a 286-residue protein sequence, read N- to C-terminus: Polyamine aminopropyltransferase (286 aa).

Positions 1–235 constitute a PABS domain; the sequence is MSDYQETLYE…GAMTFAWGAT (235 aa). Residue Gln-30 coordinates S-methyl-5'-thioadenosine. Residues His-61 and Asp-85 each contribute to the spermidine site. Residues Glu-105 and 137–138 contribute to the S-methyl-5'-thioadenosine site; that span reads DG. Catalysis depends on Asp-155, which acts as the Proton acceptor. 155–158 provides a ligand contact to spermidine; it reads DSTD. S-methyl-5'-thioadenosine is bound at residue Pro-162.

Belongs to the spermidine/spermine synthase family. Homodimer or homotetramer.

It is found in the cytoplasm. It catalyses the reaction S-adenosyl 3-(methylsulfanyl)propylamine + putrescine = S-methyl-5'-thioadenosine + spermidine + H(+). It functions in the pathway amine and polyamine biosynthesis; spermidine biosynthesis; spermidine from putrescine: step 1/1. Functionally, catalyzes the irreversible transfer of a propylamine group from the amino donor S-adenosylmethioninamine (decarboxy-AdoMet) to putrescine (1,4-diaminobutane) to yield spermidine. This chain is Polyamine aminopropyltransferase, found in Pseudomonas syringae pv. tomato (strain ATCC BAA-871 / DC3000).